Reading from the N-terminus, the 855-residue chain is Envelope glycoprotein gp150 (855 aa).

At Met-1–Lys-784 the chain is on the extracellular side. N-linked (GlcNAc...) asparagine; by host glycans are attached at residues Asn-135, Asn-220, Asn-258, Asn-269, Asn-274, Asn-298, Asn-330, Asn-336, Asn-342, Asn-372, Asn-418, Asn-422, Asn-448, Asn-469, Asn-481, Asn-499, Asn-518, Asn-531, Asn-548, and Asn-551. Residues Ile-615–Ile-635 form a fusion peptide region. Positions His-642–Ala-692 form a coiled coil. The tract at residues Ile-661–Arg-679 is immunosuppression. 4 N-linked (GlcNAc...) asparagine; by host glycosylation sites follow: Asn-716, Asn-720, Asn-728, and Asn-736. A coiled-coil region spans residues Tyr-735 to Asn-771. A helical transmembrane segment spans residues Gly-785 to Pro-805. The Cytoplasmic segment spans residues Thr-806 to Glu-855.

The mature envelope protein (Env) consists of a trimer of SU-TM heterodimers attached by noncovalent interactions or by a labile interchain disulfide bond. Post-translationally, specific enzymatic cleavages in vivo yield mature proteins. Envelope glycoproteins are synthesized as an inactive precursor that is N-glycosylated and processed likely by host cell furin or by a furin-like protease in the Golgi to yield the mature SU and TM proteins. The cleavage site between SU and TM requires the minimal sequence [KR]-X-[KR]-R.

It is found in the virion membrane. The protein localises to the host cell membrane. In terms of biological role, the surface protein (SU) attaches the virus to the host cell by binding to its receptor. This interaction triggers the refolding of the transmembrane protein (TM) and is thought to activate its fusogenic potential by unmasking its fusion peptide. Fusion occurs at the host cell plasma membrane. The transmembrane protein (TM) acts as a class I viral fusion protein. Under the current model, the protein has at least 3 conformational states: pre-fusion native state, pre-hairpin intermediate state, and post-fusion hairpin state. During viral and target cell membrane fusion, the coiled coil regions (heptad repeats) assume a trimer-of-hairpins structure, positioning the fusion peptide in close proximity to the C-terminal region of the ectodomain. The formation of this structure appears to drive apposition and subsequent fusion of viral and target cell membranes. Membranes fusion leads to delivery of the nucleocapsid into the cytoplasm. The polypeptide is Envelope glycoprotein gp150 (env) (Feline immunodeficiency virus (isolate TM2) (FIV)).